Here is a 964-residue protein sequence, read N- to C-terminus: Integrator complex subunit 7 (964 aa).

Over residues 937-958 (QQLRHQLQQQQQNVPQPAAQRN) the composition is skewed to low complexity. The interval 937–964 (QQLRHQLQQQQQNVPQPAAQRNISTRFQ) is disordered.

The protein belongs to the Integrator subunit 7 family. In terms of assembly, component of the Integrator complex, composed of core subunits INTS1, INTS2, INTS3, INTS4, INTS5, INTS6, INTS7, INTS8, INTS9/RC74, INTS10, INTS11/CPSF3L, INTS12, INTS13, INTS14 and INTS15. The core complex associates with protein phosphatase 2A subunits PPP2CA and PPP2R1A, to form the Integrator-PP2A (INTAC) complex.

The protein resides in the nucleus. Its subcellular location is the chromosome. It is found in the cytoplasm. Component of the integrator complex, a multiprotein complex that terminates RNA polymerase II (Pol II) transcription in the promoter-proximal region of genes. The integrator complex provides a quality checkpoint during transcription elongation by driving premature transcription termination of transcripts that are unfavorably configured for transcriptional elongation: the complex terminates transcription by (1) catalyzing dephosphorylation of the C-terminal domain (CTD) of Pol II subunit POLR2A/RPB1 and SUPT5H/SPT5, (2) degrading the exiting nascent RNA transcript via endonuclease activity and (3) promoting the release of Pol II from bound DNA. The integrator complex is also involved in terminating the synthesis of non-coding Pol II transcripts, such as enhancer RNAs (eRNAs), small nuclear RNAs (snRNAs), telomerase RNAs and long non-coding RNAs (lncRNAs). Essential during embryogenesis for eye development. This is Integrator complex subunit 7 (ints7) from Danio rerio (Zebrafish).